The following is a 284-amino-acid chain: 2,3,4,5-tetrahydropyridine-2,6-dicarboxylate N-succinyltransferase (284 aa).

Arg111 and Asp148 together coordinate substrate.

The protein belongs to the transferase hexapeptide repeat family. Homotrimer.

The protein resides in the cytoplasm. The catalysed reaction is (S)-2,3,4,5-tetrahydrodipicolinate + succinyl-CoA + H2O = (S)-2-succinylamino-6-oxoheptanedioate + CoA. It functions in the pathway amino-acid biosynthesis; L-lysine biosynthesis via DAP pathway; LL-2,6-diaminopimelate from (S)-tetrahydrodipicolinate (succinylase route): step 1/3. This is 2,3,4,5-tetrahydropyridine-2,6-dicarboxylate N-succinyltransferase from Brucella melitensis biotype 2 (strain ATCC 23457).